We begin with the raw amino-acid sequence, 635 residues long: MKLENTLFTLGALGSISAALVIPNLENAADHHELINKEDHHERPRKVEFTKDDDEEPSDSEDKEHGKFHKKGRKGQDKESPEFNGKRASGSHGSAHEGGKGMKPKHESSNDDDNDDKKKKPHHKGGCHENKVEEKKMKGKKVKGKKHHEKTLEKGRHHNRLAPLVSTAQFNPDAISKIIPNRYIIVFKRGAPQEEIDFHKENVQQAQLQSVENLSAEDAFFISTKDTSLSTSEAGGIQDSFNIDNLFSGYIGYFTQEIVDLIRQNPLVDFVERDSIVEATEFDTQNSAPWGLARISHRERLNLGSFNKYLYDDDAGRGVTSYVIDTGVNINHKDFEKRAIWGKTIPLNDEDLDGNGHGTHCAGTIASKHYGVAKNANVVAVKVLRSNGSGTMSDVVKGVEYAAKAHQKEAQEKKKGFKGSTANMSLGGGKSPALDLAVNAAVEVGIHFAVAAGNENQDACNTSPASADKAITVGASTLSDDRAYFSNWGKCVDVFAPGLNILSTYIGSDDATATLSGTSMASPHVAGLLTYFLSLQPGSDSEFFELGQDSLTPQQLKKKLIHYSTKDILFDIPEDTPNVLIYNGGGQDLSAFWNDTKKSHSSGFKQELNMDEFIGSKTDLIFDQVRDILDKLNII.

The signal sequence occupies residues 1-19 (MKLENTLFTLGALGSISAA). The propeptide occupies 20-280 (LVIPNLENAA…VERDSIVEAT (261 aa)). Basic and acidic residues-rich tracts occupy residues 35-50 (INKEDHHERPRKVEFT), 74-85 (KGQDKESPEFNG), 94-109 (SAHEGGKGMKPKHESS), and 126-136 (GCHENKVEEKK). A disordered region spans residues 35-155 (INKEDHHERP…KHHEKTLEKG (121 aa)). A compositionally biased stretch (basic residues) spans 137–155 (MKGKKVKGKKHHEKTLEKG). The Inhibitor I9 domain occupies 182-278 (RYIIVFKRGA…DFVERDSIVE (97 aa)). In terms of domain architecture, Peptidase S8 spans 289–614 (PWGLARISHR…KQELNMDEFI (326 aa)). Catalysis depends on charge relay system residues aspartate 325 and histidine 357. A disulfide bridge connects residues cysteine 460 and cysteine 491. The Charge relay system role is filled by serine 519. Positions 575–635 (DTPNVLIYNG…RDILDKLNII (61 aa)) are excised as a propeptide. The N-linked (GlcNAc...) asparagine glycan is linked to asparagine 594.

Belongs to the peptidase S8 family. Post-translationally, activated by N- and C-terminal proteolytic cleavage. Protease B (PrB/PRB1) processing requires at least 4 cleavages. First, the signal peptide is removed from the 76 kDa preproprotease B by signal peptidase in the ER. Then, PrB removes its own Pro-region (in trans) at the N-terminus, producing a 39 kDa form before exiting the ER. In the Golgi complex, the C-terminal Post-region of the 40 kDa proprotease B undergoes protease A (PrA/PEP4)-mediated processing to a 37 kDa intermediate, which in turn is quickly processed again by PrB in trans to yield the 31 kDa mature PrB. Glycosylated. Preproprotease B is a 76 kDa unglycosylated precursor that enters the endoplasmic reticulum (ER), where it receives one Asn-linked and an undetermined number of non-Asn-linked carbohydrate side chains. In the Golgi complex, the 39 kDa form becomes 40 kDa, due to elaboration of the Asn-linked side chain. The ultimate processing step removes a peptide containing the Asn-linked chain. Mature PrB has only non-Asn-linked carbohydrates.

It localises to the vacuole. It catalyses the reaction Hydrolysis of proteins with broad specificity, and of Bz-Arg-OEt &gt; Ac-Tyr-OEt. Does not hydrolyze peptide amides.. Functionally, vacuolar proteinase B involved in protein degradation in the vacuole. Among other substrates, acts on carboxypeptidase Y (cpY/PRC1) to activate it by processing its Pro-peptide. Required for meiosis and spore formation, and for optimal survival in stationary phase. In Saccharomyces cerevisiae (strain ATCC 204508 / S288c) (Baker's yeast), this protein is Cerevisin (PRB1).